Here is a 242-residue protein sequence, read N- to C-terminus: UDP-2,3-diacylglucosamine hydrolase (242 aa).

Positions 8, 10, 41, 79, and 114 each coordinate Mn(2+). Substrate is bound at residue 79-80 (NR). The substrate site is built by Asp-122, Lys-164, Lys-167, and His-195. Mn(2+) contacts are provided by His-195 and His-197.

Belongs to the LpxH family. The cofactor is Mn(2+).

It localises to the cell inner membrane. It catalyses the reaction UDP-2-N,3-O-bis[(3R)-3-hydroxytetradecanoyl]-alpha-D-glucosamine + H2O = 2-N,3-O-bis[(3R)-3-hydroxytetradecanoyl]-alpha-D-glucosaminyl 1-phosphate + UMP + 2 H(+). It participates in glycolipid biosynthesis; lipid IV(A) biosynthesis; lipid IV(A) from (3R)-3-hydroxytetradecanoyl-[acyl-carrier-protein] and UDP-N-acetyl-alpha-D-glucosamine: step 4/6. Hydrolyzes the pyrophosphate bond of UDP-2,3-diacylglucosamine to yield 2,3-diacylglucosamine 1-phosphate (lipid X) and UMP by catalyzing the attack of water at the alpha-P atom. Involved in the biosynthesis of lipid A, a phosphorylated glycolipid that anchors the lipopolysaccharide to the outer membrane of the cell. The chain is UDP-2,3-diacylglucosamine hydrolase from Vibrio parahaemolyticus serotype O3:K6 (strain RIMD 2210633).